The chain runs to 148 residues: Large ribosomal subunit protein uL13 (148 aa).

Belongs to the universal ribosomal protein uL13 family. In terms of assembly, part of the 50S ribosomal subunit.

Functionally, this protein is one of the early assembly proteins of the 50S ribosomal subunit, although it is not seen to bind rRNA by itself. It is important during the early stages of 50S assembly. In Ureaplasma urealyticum serovar 10 (strain ATCC 33699 / Western), this protein is Large ribosomal subunit protein uL13.